The chain runs to 221 residues: Protein LURP-one-related 17 (221 aa).

Residues 1–20 (MFPFLKQRSRSVHGEDAPSS) are disordered.

The protein belongs to the LOR family.

Its function is as follows. Might be related to the phospholipid scramblase and tubby-like superfamily of membrane tethered transcription factors. This is Protein LURP-one-related 17 from Arabidopsis thaliana (Mouse-ear cress).